The following is a 285-amino-acid chain: tRNA pseudouridine synthase B (285 aa).

Aspartate 38 serves as the catalytic Nucleophile.

This sequence belongs to the pseudouridine synthase TruB family. Type 1 subfamily.

It carries out the reaction uridine(55) in tRNA = pseudouridine(55) in tRNA. Responsible for synthesis of pseudouridine from uracil-55 in the psi GC loop of transfer RNAs. This is tRNA pseudouridine synthase B from Geobacillus kaustophilus (strain HTA426).